The following is a 615-amino-acid chain: Threonine--tRNA ligase (615 aa).

The segment at 1 to 132 (MRILQLHCDR…PLAEGFKVIT (132 aa)) is editing domain. A catalytic region spans residues 196–495 (PHVALMKRMG…SARGTKPELP (300 aa)). Positions 288, 340, and 464 each coordinate Zn(2+).

Belongs to the class-II aminoacyl-tRNA synthetase family. As to quaternary structure, homodimer. Zn(2+) is required as a cofactor.

The protein localises to the cytoplasm. The enzyme catalyses tRNA(Thr) + L-threonine + ATP = L-threonyl-tRNA(Thr) + AMP + diphosphate + H(+). Catalyzes the attachment of threonine to tRNA(Thr) in a two-step reaction: L-threonine is first activated by ATP to form Thr-AMP and then transferred to the acceptor end of tRNA(Thr). Also edits incorrectly charged L-seryl-tRNA(Thr). The sequence is that of Threonine--tRNA ligase (thrS) from Cenarchaeum symbiosum (strain A).